We begin with the raw amino-acid sequence, 565 residues long: DNA-binding protein scr1 (565 aa).

Polar residues predominate over residues 1–19 (MSEATTATTTGKPSRSTKN). The disordered stretch occupies residues 1-25 (MSEATTATTTGKPSRSTKNPDAPRP). 2 consecutive C2H2-type zinc fingers follow at residues 26–48 (YKCPLCTKAFYRLEHQTRHIRTH) and 54–78 (HVCTFPGCAKRFSRSDELTRHARIH). Disordered regions lie at residues 79–119 (TNAN…VHMT), 261–303 (SNAP…STGS), 390–434 (RPVS…DDPS), and 466–565 (ASTP…MTKP). The span at 80–102 (NANSRRNAAAAAAANNSARSSNS) shows a compositional bias: low complexity. Composition is skewed to polar residues over residues 108–119 (EPSTNNAGVHMT), 276–286 (LPSSSNTSPNH), and 294–303 (GLTSNSSTGS). The segment covering 391–413 (PVSPCSTAPSSPTFSTRSFSPTP) has biased composition (low complexity). A compositionally biased stretch (polar residues) spans 466-478 (ASTPASGAVSRTP). Low complexity-rich tracts occupy residues 479–492 (SSVSLSSLSNVNSS), 517–526 (FSSSSRVSVS), and 537–555 (SSSTKSASSSYSTTTPAFS).

Belongs to the creA/MIG C2H2-type zinc-finger protein family.

The protein localises to the nucleus. Functionally, involved in carbon catabolite repression. Represses the transcription of various genes including the inv1 gene. This chain is DNA-binding protein scr1 (scr1), found in Schizosaccharomyces pombe (strain 972 / ATCC 24843) (Fission yeast).